Consider the following 143-residue polypeptide: Transcriptional regulator MraZ (143 aa).

SpoVT-AbrB domains are found at residues Thr-5–Glu-47 and Thr-76–Ala-119.

This sequence belongs to the MraZ family. As to quaternary structure, forms oligomers.

The protein resides in the cytoplasm. It localises to the nucleoid. This chain is Transcriptional regulator MraZ, found in Nocardia farcinica (strain IFM 10152).